The sequence spans 428 residues: 3-phosphoshikimate 1-carboxyvinyltransferase (428 aa).

Positions 22, 23, and 27 each coordinate 3-phosphoshikimate. A phosphoenolpyruvate-binding site is contributed by lysine 22. Glycine 96 and arginine 124 together coordinate phosphoenolpyruvate. Positions 170, 171, 172, 198, 314, 337, and 341 each coordinate 3-phosphoshikimate. Glutamine 172 provides a ligand contact to phosphoenolpyruvate. Aspartate 314 acts as the Proton acceptor in catalysis. Positions 345, 387, and 412 each coordinate phosphoenolpyruvate.

The protein belongs to the EPSP synthase family. In terms of assembly, monomer.

Its subcellular location is the cytoplasm. It carries out the reaction 3-phosphoshikimate + phosphoenolpyruvate = 5-O-(1-carboxyvinyl)-3-phosphoshikimate + phosphate. Its pathway is metabolic intermediate biosynthesis; chorismate biosynthesis; chorismate from D-erythrose 4-phosphate and phosphoenolpyruvate: step 6/7. In terms of biological role, catalyzes the transfer of the enolpyruvyl moiety of phosphoenolpyruvate (PEP) to the 5-hydroxyl of shikimate-3-phosphate (S3P) to produce enolpyruvyl shikimate-3-phosphate and inorganic phosphate. This chain is 3-phosphoshikimate 1-carboxyvinyltransferase, found in Photobacterium profundum (strain SS9).